The sequence spans 169 residues: Shikimate kinase (169 aa).

12 to 17 (GCGKST) serves as a coordination point for ATP. A Mg(2+)-binding site is contributed by serine 16. Residues aspartate 34, arginine 57, and glycine 79 each contribute to the substrate site. ATP is bound at residue arginine 116. Arginine 133 lines the substrate pocket.

This sequence belongs to the shikimate kinase family. In terms of assembly, monomer. It depends on Mg(2+) as a cofactor.

The protein resides in the cytoplasm. The catalysed reaction is shikimate + ATP = 3-phosphoshikimate + ADP + H(+). It participates in metabolic intermediate biosynthesis; chorismate biosynthesis; chorismate from D-erythrose 4-phosphate and phosphoenolpyruvate: step 5/7. In terms of biological role, catalyzes the specific phosphorylation of the 3-hydroxyl group of shikimic acid using ATP as a cosubstrate. The protein is Shikimate kinase of Clostridium beijerinckii (strain ATCC 51743 / NCIMB 8052) (Clostridium acetobutylicum).